The sequence spans 392 residues: MNIHEYQAKEILRVCGVPTPAGFLVQEDTETSEIAKSLARLGGKVFAVKAQIHAGGRGKAGGVVICRSVEEAIDNTKKMLGMNLVTHQTSPAGQKVRKVYIEAGQSILKEYYLSMVVDRENAKVAIIASEEGGMDIEEIARSTPEKIKKVFVDLSIGISDFHARKIGFELGLSLAQIKQFTPLVKKLYALFVTRDASQVEINPLIANSKGEFIALDAKLNFDDNALYRHPDTLELRDLYEEDPKEIEAAKYNLNYIKMEGGIGCMVNGAGLAMATMDIIKYYGASPANFLDVGGGANLEQVTNAFKIISSDKHVAGILVNIFGGIMRCDIIAEGIVAAAKDIGLTMPLVVRLSGTNYSAGIKIIEGSGLNIVTASELDDAAQKIVKLTRKEI.

Residues 9 to 247 enclose the ATP-grasp domain; sequence KEILRVCGVP…LYEEDPKEIE (239 aa). ATP is bound by residues Lys-49, 56–58, Glu-102, Gln-105, and Glu-110; that span reads GRG. Mg(2+) contacts are provided by Asn-202 and Asp-216. Substrate contacts are provided by residues Asn-267 and 324–326; that span reads GIM.

The protein belongs to the succinate/malate CoA ligase beta subunit family. In terms of assembly, heterotetramer of two alpha and two beta subunits. Mg(2+) is required as a cofactor.

The enzyme catalyses succinate + ATP + CoA = succinyl-CoA + ADP + phosphate. The catalysed reaction is GTP + succinate + CoA = succinyl-CoA + GDP + phosphate. Its pathway is carbohydrate metabolism; tricarboxylic acid cycle; succinate from succinyl-CoA (ligase route): step 1/1. In terms of biological role, succinyl-CoA synthetase functions in the citric acid cycle (TCA), coupling the hydrolysis of succinyl-CoA to the synthesis of either ATP or GTP and thus represents the only step of substrate-level phosphorylation in the TCA. The beta subunit provides nucleotide specificity of the enzyme and binds the substrate succinate, while the binding sites for coenzyme A and phosphate are found in the alpha subunit. This is Succinate--CoA ligase [ADP-forming] subunit beta from Neorickettsia sennetsu (strain ATCC VR-367 / Miyayama) (Ehrlichia sennetsu).